A 173-amino-acid polypeptide reads, in one-letter code: RNA polymerase sigma factor YlaC (173 aa).

The protein belongs to the sigma-70 factor family. ECF subfamily.

Sigma factors are initiation factors that promote the attachment of RNA polymerase to specific initiation sites and are then released. This sigma factor contributes to oxidative stress resistance. This chain is RNA polymerase sigma factor YlaC (ylaC), found in Bacillus subtilis (strain 168).